The chain runs to 624 residues: tRNA uridine 5-carboxymethylaminomethyl modification enzyme MnmG (624 aa).

FAD contacts are provided by residues 13–18, Val-125, and Ser-180; that span reads GGGHAG. 273–287 serves as a coordination point for NAD(+); that stretch reads GPRYCPSIEDKIVRF. Residue Gln-370 participates in FAD binding.

The protein belongs to the MnmG family. In terms of assembly, homodimer. Heterotetramer of two MnmE and two MnmG subunits. FAD serves as cofactor.

The protein resides in the cytoplasm. NAD-binding protein involved in the addition of a carboxymethylaminomethyl (cmnm) group at the wobble position (U34) of certain tRNAs, forming tRNA-cmnm(5)s(2)U34. This is tRNA uridine 5-carboxymethylaminomethyl modification enzyme MnmG from Legionella pneumophila (strain Paris).